We begin with the raw amino-acid sequence, 112 residues long: Protein SMALL AUXIN UP-REGULATED RNA 10 (112 aa).

Belongs to the ARG7 family. As to expression, confined to the veins and petioles of rosette leaves and cauline leaves, and specifically expressed at the abaxial side of inflorescence branche; relocates to both the adaxial (Ad) and abaxial (Ab) sides of the branch in reduced red:far-red (R:FR) light, during shade. Also present in flowers.

The protein localises to the cell membrane. Its function is as follows. Provide a mechanistic link between auxin and plasma membrane H(+)-ATPases (PM H(+)-ATPases, e.g. AHA1 and AHA2), and triggers PM H(+)-ATPases activity by promoting phosphorylation of their C-terminal autoinhibitory domain as a result of PP2C-D subfamily of type 2C phosphatases inhibition, thus leading to the acidification of the apoplast and the facilitation of solutes and water uptake to drive cell expansion. Triggers plant growth probably by promoting cell elongation. Regulates branch angles and bending. The sequence is that of Protein SMALL AUXIN UP-REGULATED RNA 10 from Arabidopsis thaliana (Mouse-ear cress).